Consider the following 37-residue polypeptide: Large ribosomal subunit protein bL36 (37 aa).

The protein belongs to the bacterial ribosomal protein bL36 family.

The polypeptide is Large ribosomal subunit protein bL36 (Vesicomyosocius okutanii subsp. Calyptogena okutanii (strain HA)).